The following is a 307-amino-acid chain: MPTLPGSLTLVKGIKPQPLVSLANFTSWRVGGPAEWFASPSSVEELQTLIAWAYEQKMPCRVIGAGSNLLINDTGLPGLSLCMRKLQGSDLDPKTGIVEALAGEPIPNLSKRAAKVGLHGLEWAVGIPGTVGGAAVMNAGAQGGCTADWLESVQVLDLNGEGPFELSRQELDYAYRQSLLQEKTLVVLSARFRLDPGHDHKELNQITQQNLTHRTTTQPYQLPSCGSVFRNPEPLKAGRLIEALGLKGHRIGGAEVSPIHANFIVNIGGATAADINQMITLIQQRVQMAHGVMLHPEVKRLGFEATA.

Residues 29 to 197 form the FAD-binding PCMH-type domain; sequence RVGGPAEWFA…LSARFRLDPG (169 aa). The active site involves Arg176. Residue Ser227 is the Proton donor of the active site. Residue Glu297 is part of the active site.

Belongs to the MurB family. The cofactor is FAD.

Its subcellular location is the cytoplasm. The catalysed reaction is UDP-N-acetyl-alpha-D-muramate + NADP(+) = UDP-N-acetyl-3-O-(1-carboxyvinyl)-alpha-D-glucosamine + NADPH + H(+). It functions in the pathway cell wall biogenesis; peptidoglycan biosynthesis. In terms of biological role, cell wall formation. This Prochlorococcus marinus (strain MIT 9313) protein is UDP-N-acetylenolpyruvoylglucosamine reductase.